We begin with the raw amino-acid sequence, 170 residues long: Acireductone dioxygenase (170 aa).

Residues histidine 99, histidine 101, glutamate 105, and histidine 144 each contribute to the Fe(2+) site. Histidine 99, histidine 101, glutamate 105, and histidine 144 together coordinate Ni(2+).

The protein belongs to the acireductone dioxygenase (ARD) family. Monomer. The cofactor is Fe(2+). Ni(2+) is required as a cofactor.

The catalysed reaction is 1,2-dihydroxy-5-(methylsulfanyl)pent-1-en-3-one + O2 = 3-(methylsulfanyl)propanoate + CO + formate + 2 H(+). It carries out the reaction 1,2-dihydroxy-5-(methylsulfanyl)pent-1-en-3-one + O2 = 4-methylsulfanyl-2-oxobutanoate + formate + 2 H(+). Its pathway is amino-acid biosynthesis; L-methionine biosynthesis via salvage pathway; L-methionine from S-methyl-5-thio-alpha-D-ribose 1-phosphate: step 5/6. Catalyzes 2 different reactions between oxygen and the acireductone 1,2-dihydroxy-3-keto-5-methylthiopentene (DHK-MTPene) depending upon the metal bound in the active site. Fe-containing acireductone dioxygenase (Fe-ARD) produces formate and 2-keto-4-methylthiobutyrate (KMTB), the alpha-ketoacid precursor of methionine in the methionine recycle pathway. Ni-containing acireductone dioxygenase (Ni-ARD) produces methylthiopropionate, carbon monoxide and formate, and does not lie on the methionine recycle pathway. The protein is Acireductone dioxygenase of Bacillus mycoides (strain KBAB4) (Bacillus weihenstephanensis).